The primary structure comprises 275 residues: Low affinity immunoglobulin gamma Fc region receptor III-A (275 aa).

The N-terminal stretch at Met1–Ala23 is a signal peptide. Residues Gly24–Gln207 are Extracellular-facing. 2 Ig-like C2-type domains span residues Ala28–Gln92 and Pro101–Thr192. Disulfide bonds link Cys49–Cys91 and Cys131–Cys175. 3 N-linked (GlcNAc...) asparagine glycosylation sites follow: Asn65, Asn168, and Asn183. The chain crosses the membrane as a helical span at residues Ile208–Val228. Over Gln229–Arg275 the chain is Cytoplasmic. The disordered stretch occupies residues Ala237 to Arg275. Tyr239 is subject to Phosphotyrosine. Basic and acidic residues predominate over residues Pro242–Ser261. Residues Phe262–Arg275 show a composition bias toward polar residues.

In terms of assembly, forms a heterooligomeric complex with ITAM-containing signaling subunits FCER1G. Interacts (via transmembrane domain) with signaling subunits; this interaction is a prerequisite for receptor complex expression on the cell surface and intracellular signal transduction. Binds the Fc region of antigen-complexed IgG. Post-translationally, N-glycosylated. Phosphorylated following receptor ligation.

It is found in the cell membrane. Its function is as follows. Receptor for the invariable Fc fragment of immunoglobulin gamma (IgG). Binds with intermediate affinity to both IgG2a and IgG2b. Can bind to IgG2a and IgG2b monomers. Does not display binding to IgG1 or IgG3. Recognizes neutralizing virus-specific IgGs displayed on the cell surface of infected cells and triggers antibody-dependent cellular cytotoxicity (ADCC). Confers protection to lethal influenza virus infection. On splenic dendritic cells, uptakes antigen immune complexes and efficiently divert them into MHC class I and II antigen presentation pathways to provide for superior priming of CD4-positive and CD8-positive T cell immune responses. Mediates neutrophil activation by IgG complexes redundantly with FCGR2A. Plays a role in promoting bone resorption by enhancing osteoclast differentiation following binding to IgG2a. Also acts as a receptor for the Fc region of immunoglobulin epsilon (IgE). Binds with low affinity to both the a and b allotypes of IgE. Has also been shown to bind to IgE allotype a only but not to allotype b. Binds aggregated IgE but not the monomeric form and bound monomeric IgG is readily displaced by IgE complexes. Binding to IgE promotes macrophage-mediated phagocytosis, antigen presentation to T cells, production of pro-inflammatory cytokines and the late phase of cutaneous allergic reactions. Mediates enhanced ADCC in response to afucosylated IgGs. This is Low affinity immunoglobulin gamma Fc region receptor III-A from Cricetulus griseus (Chinese hamster).